Consider the following 333-residue polypeptide: Leukocyte cell-derived chemotaxin 1 (333 aa).

The helical transmembrane segment at 42–62 (VGAVVLISGAVLLLFGAIGAF) threads the bilayer. The BRICHOS domain occupies 104 to 201 (GSGAEEAIEV…LCGDLPIFWL (98 aa)). A disulfide bridge connects residues C131 and C193. A propeptide spanning residues 211–214 (RERR) is cleaved from the precursor. Residues 212–269 (ERREVVRKTVPTTTKRPHSGPRGNPGPARMRNDSRPSVQEDSEPFNPDNPYHQEGESM) are disordered. The N-linked (GlcNAc...) asparagine glycan is linked to N243. Disulfide bonds link C281–C285, C282–C322, C292–C316, and C296–C312.

This sequence belongs to the chondromodulin-1 family. Post-translationally, after cleavage, the post-translationally modified ChM-I is secreted as a glycoprotein.

It localises to the secreted. It is found in the extracellular space. The protein resides in the extracellular matrix. The protein localises to the endomembrane system. Functionally, bifunctional growth regulator that stimulates the growth of cultured chondrocytes in the presence of basic fibroblast growth factor (FGF) but inhibits the growth of cultured vascular endothelial cells. May contribute to the rapid growth of cartilage and vascular invasion prior to the replacement of cartilage by bone during endochondral bone development. Inhibits in vitro tube formation and mobilization of endothelial cells. Plays a role as antiangiogenic factor in cardiac valves to suppress neovascularization. This Oryctolagus cuniculus (Rabbit) protein is Leukocyte cell-derived chemotaxin 1.